The primary structure comprises 162 residues: Probable chemoreceptor glutamine deamidase CheD (162 aa).

Belongs to the CheD family.

It carries out the reaction L-glutaminyl-[protein] + H2O = L-glutamyl-[protein] + NH4(+). In terms of biological role, probably deamidates glutamine residues to glutamate on methyl-accepting chemotaxis receptors (MCPs), playing an important role in chemotaxis. The sequence is that of Probable chemoreceptor glutamine deamidase CheD from Clostridium botulinum (strain Eklund 17B / Type B).